The primary structure comprises 141 residues: Protein X (141 aa).

Residues 25–52 form a disordered region; it reads SSGPSFPRPAAGSAASSASSPSPSDDSD. The segment at 68 to 113 is mitochondrial targeting sequence; sequence PCCLVFTCADLRTMDSTVNFVSWHANRQLGMPSKDLWTPYIKDQLL.

This sequence belongs to the orthohepadnavirus protein X family. In terms of assembly, may form homodimer. May interact with host CEBPA, CFLAR, CREB1, DDB1, E4F1, HBXIP, HSPD1/HSP60, NFKBIA, POLR2E and SMAD4. Interacts with host SMC5-SMC6 complex and induces its degradation. Interacts with host TRPC4AP; leading to prevent ubiquitination of TRPC4AP. Interacts with host PLSCR1; this interaction promotes ubiquitination and degradation of HBx and impairs HBx-mediated cell proliferation. Post-translationally, a fraction may be phosphorylated in insect cells and HepG2 cells, a human hepatoblastoma cell line. Phosphorylated in vitro by host protein kinase C or mitogen-activated protein kinase. N-acetylated in insect cells.

It localises to the host cytoplasm. Its subcellular location is the host nucleus. It is found in the host mitochondrion. In terms of biological role, multifunctional protein that plays a role in silencing host antiviral defenses and promoting viral transcription. Does not seem to be essential for HBV infection. May be directly involved in development of cirrhosis and liver cancer (hepatocellular carcinoma). Most of cytosolic activities involve modulation of cytosolic calcium. The effect on apoptosis is controversial depending on the cell types in which the studies have been conducted. May induce apoptosis by localizing in mitochondria and causing loss of mitochondrial membrane potential. May also modulate apoptosis by binding host CFLAR, a key regulator of the death-inducing signaling complex (DISC). Promotes viral transcription by using the host E3 ubiquitin ligase DDB1 to target the SMC5-SMC6 complex to proteasomal degradation. This host complex would otherwise bind to viral episomal DNA, and prevents its transcription. Moderately stimulates transcription of many different viral and cellular transcription elements. Promoters and enhancers stimulated by HBx contain DNA binding sites for NF-kappa-B, AP-1, AP-2, c-EBP, ATF/CREB, or the calcium-activated factor NF-AT. The polypeptide is Protein X (Woodchuck hepatitis B virus (isolate 2) (WHV)).